A 189-amino-acid polypeptide reads, in one-letter code: Peptidyl-tRNA hydrolase (189 aa).

Position 15 (Tyr15) interacts with tRNA. His20 functions as the Proton acceptor in the catalytic mechanism. Residues Phe66, Asn68, and Asn114 each coordinate tRNA.

The protein belongs to the PTH family. In terms of assembly, monomer.

Its subcellular location is the cytoplasm. The enzyme catalyses an N-acyl-L-alpha-aminoacyl-tRNA + H2O = an N-acyl-L-amino acid + a tRNA + H(+). Functionally, hydrolyzes ribosome-free peptidyl-tRNAs (with 1 or more amino acids incorporated), which drop off the ribosome during protein synthesis, or as a result of ribosome stalling. Catalyzes the release of premature peptidyl moieties from peptidyl-tRNA molecules trapped in stalled 50S ribosomal subunits, and thus maintains levels of free tRNAs and 50S ribosomes. This is Peptidyl-tRNA hydrolase from Streptococcus pneumoniae (strain P1031).